The primary structure comprises 157 residues: Transcription elongation factor GreA (157 aa).

It belongs to the GreA/GreB family.

Functionally, necessary for efficient RNA polymerase transcription elongation past template-encoded arresting sites. The arresting sites in DNA have the property of trapping a certain fraction of elongating RNA polymerases that pass through, resulting in locked ternary complexes. Cleavage of the nascent transcript by cleavage factors such as GreA or GreB allows the resumption of elongation from the new 3'terminus. GreA releases sequences of 2 to 3 nucleotides. The chain is Transcription elongation factor GreA from Phenylobacterium zucineum (strain HLK1).